The chain runs to 205 residues: MSIMSYNGGAVMAMKGKNCVAIAADRRFGIQAQMVTTDFQKIFPMGDRLYIGLAGLATDVQTVAQRLKFRLNLYELKEGRQIKPYTLMSMVANLLYEKRFGPYYTEPVIAGLDPKTFKPFICSLDLIGCPMVTDDFVVSGTCAEQMYGMCESLWEPNMDPDHLFETISQAMLNAVDRDAVSGMGVIVHIIEKDKITTRTLKARMD.

N-acetylserine is present on Ser-2. Lys-77 is subject to N6-acetyllysine.

It belongs to the peptidase T1B family. In terms of assembly, the 26S proteasome consists of a 20S proteasome core and two 19S regulatory subunits. The 20S proteasome core is a barrel-shaped complex made of 28 subunits that are arranged in four stacked rings. The two outer rings are each formed by seven alpha subunits, and the two inner rings are formed by seven beta subunits. The proteolytic activity is exerted by three beta-subunits PSMB5, PSMB6 and PSMB7. (Microbial infection) Interacts with HIV-1 TAT protein.

The protein localises to the cytoplasm. It is found in the nucleus. Its function is as follows. Non-catalytic component of the 20S core proteasome complex involved in the proteolytic degradation of most intracellular proteins. This complex plays numerous essential roles within the cell by associating with different regulatory particles. Associated with two 19S regulatory particles, forms the 26S proteasome and thus participates in the ATP-dependent degradation of ubiquitinated proteins. The 26S proteasome plays a key role in the maintenance of protein homeostasis by removing misfolded or damaged proteins that could impair cellular functions, and by removing proteins whose functions are no longer required. Associated with the PA200 or PA28, the 20S proteasome mediates ubiquitin-independent protein degradation. This type of proteolysis is required in several pathways including spermatogenesis (20S-PA200 complex) or generation of a subset of MHC class I-presented antigenic peptides (20S-PA28 complex). The protein is Proteasome subunit beta type-3 of Homo sapiens (Human).